Here is a 347-residue protein sequence, read N- to C-terminus: Glycerol-3-phosphate dehydrogenase [NAD(P)+] (347 aa).

Residues Trp20, Arg39, and Lys118 each contribute to the NADPH site. Sn-glycerol 3-phosphate is bound by residues Lys118, Gly152, and Ser154. Ala156 provides a ligand contact to NADPH. The sn-glycerol 3-phosphate site is built by Lys207, Asp260, Ser270, Arg271, and Asn272. The Proton acceptor role is filled by Lys207. NADPH is bound at residue Arg271. NADPH-binding residues include Val295 and Glu297.

The protein belongs to the NAD-dependent glycerol-3-phosphate dehydrogenase family.

It is found in the cytoplasm. It catalyses the reaction sn-glycerol 3-phosphate + NAD(+) = dihydroxyacetone phosphate + NADH + H(+). The enzyme catalyses sn-glycerol 3-phosphate + NADP(+) = dihydroxyacetone phosphate + NADPH + H(+). Its pathway is membrane lipid metabolism; glycerophospholipid metabolism. Functionally, catalyzes the reduction of the glycolytic intermediate dihydroxyacetone phosphate (DHAP) to sn-glycerol 3-phosphate (G3P), the key precursor for phospholipid synthesis. In Cupriavidus pinatubonensis (strain JMP 134 / LMG 1197) (Cupriavidus necator (strain JMP 134)), this protein is Glycerol-3-phosphate dehydrogenase [NAD(P)+].